Consider the following 284-residue polypeptide: UPF0294 protein VV1_1880 (284 aa).

The protein belongs to the UPF0294 family.

Its subcellular location is the cytoplasm. The sequence is that of UPF0294 protein VV1_1880 from Vibrio vulnificus (strain CMCP6).